The following is a 65-amino-acid chain: Large ribosomal subunit protein uL29 (65 aa).

This sequence belongs to the universal ribosomal protein uL29 family.

This chain is Large ribosomal subunit protein uL29, found in Coxiella burnetii (strain CbuK_Q154) (Coxiella burnetii (strain Q154)).